The chain runs to 137 residues: Large ribosomal subunit protein uL16 (137 aa).

This sequence belongs to the universal ribosomal protein uL16 family. As to quaternary structure, part of the 50S ribosomal subunit.

Binds 23S rRNA and is also seen to make contacts with the A and possibly P site tRNAs. The sequence is that of Large ribosomal subunit protein uL16 from Maricaulis maris (strain MCS10) (Caulobacter maris).